Reading from the N-terminus, the 563-residue chain is TSET complex member tstC (563 aa).

Disordered stretches follow at residues Ser-146–Thr-170, Asn-192–Ser-213, Val-235–Asn-298, His-376–Lys-395, and Gly-428–Phe-563. Over residues Ala-379–Lys-395 the composition is skewed to basic and acidic residues. Over residues Gly-428–Ala-459 the composition is skewed to low complexity. Polar residues predominate over residues Thr-460–Asp-473. Composition is skewed to low complexity over residues Asn-474–Asn-487 and Asn-507–Ala-543. The segment covering Asn-552 to Phe-563 has biased composition (polar residues).

As to quaternary structure, component of the TSET complex, a heterohexamer composed of tstA, tstB, tstC, tstD, tstE and tstF, which may act in plasma membrane turnover. tstA, tstB, tstC and tstD are likely to be the core complex members with tstE and tstF acting as associated scaffold proteins.

The protein is TSET complex member tstC of Dictyostelium discoideum (Social amoeba).